Consider the following 354-residue polypeptide: Peroxisomal membrane protein PEX32 (354 aa).

A run of 5 helical transmembrane segments spans residues 24 to 44 (LLNMPPVITTALYTAFPVIFL), 63 to 83 (FIAIAIYIMVVKYWTVVACTV), 84 to 104 (LPTIIALGTCASLWFLKTTID), 151 to 171 (GFSLIAITPCYIWLMTRIFTV), and 173 to 193 (SFLLVFGVAWLSFHSSWSVAT). N-linked (GlcNAc...) asparagine glycosylation is present at asparagine 319.

This sequence belongs to the PEX28-32 family. PEX30/31 subfamily.

Its subcellular location is the peroxisome membrane. It is found in the endoplasmic reticulum membrane. Functionally, with PEX24, contributes to tethering of peroxisomes to the endoplasmic reticulum for organelle biogenesis, positioning and segregation. The polypeptide is Peroxisomal membrane protein PEX32 (Ogataea parapolymorpha (strain ATCC 26012 / BCRC 20466 / JCM 22074 / NRRL Y-7560 / DL-1) (Yeast)).